A 112-amino-acid polypeptide reads, in one-letter code: UPF0102 protein Cla_1413 (112 aa).

The protein belongs to the UPF0102 family.

In Campylobacter lari (strain RM2100 / D67 / ATCC BAA-1060), this protein is UPF0102 protein Cla_1413.